Consider the following 151-residue polypeptide: RNA polymerase-binding transcription factor DksA (151 aa).

Residues C114, C117, C135, and C138 each contribute to the Zn(2+) site. A dksA C4-type zinc finger spans residues 114 to 138 (CNSCAVEIGIRRLEARPTANLCIDC).

It belongs to the DksA family. Interacts directly with the RNA polymerase.

The protein localises to the cytoplasm. Transcription factor that acts by binding directly to the RNA polymerase (RNAP). Required for negative regulation of rRNA expression and positive regulation of several amino acid biosynthesis promoters. Also required for regulation of fis expression. The protein is RNA polymerase-binding transcription factor DksA of Buchnera aphidicola subsp. Schizaphis graminum (strain Sg).